A 564-amino-acid polypeptide reads, in one-letter code: Septation ring formation regulator EzrA (564 aa).

Residues 1–4 (MVLY) are Extracellular-facing. The helical transmembrane segment at 5–23 (IILAIIVIILIAVGVLFYL) threads the bilayer. At 24–564 (RSNKRQIIEK…KHIEEEVIKQ (541 aa)) the chain is on the cytoplasmic side. Coiled-coil stretches lie at residues 99-138 (SFNA…YKDN), 190-223 (DGNY…LIRE), 271-300 (LISR…LIEH), 350-435 (VRQF…RRLL), and 471-550 (VKQL…ESVE).

The protein belongs to the EzrA family.

It localises to the cell membrane. Negative regulator of FtsZ ring formation; modulates the frequency and position of FtsZ ring formation. Inhibits FtsZ ring formation at polar sites. Interacts either with FtsZ or with one of its binding partners to promote depolymerization. The polypeptide is Septation ring formation regulator EzrA (Staphylococcus aureus (strain NCTC 8325 / PS 47)).